Reading from the N-terminus, the 842-residue chain is GPI ethanolamine phosphate transferase 2 (842 aa).

Residue Asn186 is glycosylated (N-linked (GlcNAc...) asparagine). Residues Tyr409–Tyr429 traverse the membrane as a helical segment. The N-linked (GlcNAc...) asparagine glycan is linked to Asn441. 2 helical membrane passes run Thr442–Ile462 and Phe468–Ser488. N-linked (GlcNAc...) asparagine glycosylation is present at Asn506. The helical transmembrane segment at Gly524–Leu544 threads the bilayer. Asn551 is a glycosylation site (N-linked (GlcNAc...) asparagine). The helical transmembrane segment at Val554 to Leu574 threads the bilayer. N-linked (GlcNAc...) asparagine glycosylation is present at Asn578. The next 3 helical transmembrane spans lie at Ile615–Val635, Tyr698–Gly718, and Ile740–Phe760. N-linked (GlcNAc...) asparagine glycosylation is present at Asn771. The next 2 helical transmembrane spans lie at Tyr783–Leu803 and Met821–Leu841.

It belongs to the PIGG/PIGN/PIGO family. PIGG subfamily.

The protein localises to the endoplasmic reticulum membrane. Its pathway is glycolipid biosynthesis; glycosylphosphatidylinositol-anchor biosynthesis. Its function is as follows. Ethanolamine phosphate transferase involved in glycosylphosphatidylinositol-anchor biosynthesis. Transfers ethanolamine phosphate to the GPI second mannose. In Candida glabrata (strain ATCC 2001 / BCRC 20586 / JCM 3761 / NBRC 0622 / NRRL Y-65 / CBS 138) (Yeast), this protein is GPI ethanolamine phosphate transferase 2 (LAS21).